The chain runs to 215 residues: Cytochrome b6 (215 aa).

Residues 32–52 traverse the membrane as a helical segment; that stretch reads IFYCLGGITLVCFLIQFATGF. A heme c-binding site is contributed by cysteine 35. Heme b contacts are provided by histidine 86 and histidine 100. 3 helical membrane passes run 90 to 110, 116 to 136, and 186 to 206; these read ASMMVLMMILHVFRVYLTGGF, LTWVSGVILAVITVSFGVTGY, and AHTFVLPWLIAVFMLFHFLMI. Positions 187 and 202 each coordinate heme b.

Belongs to the cytochrome b family. PetB subfamily. In terms of assembly, the 4 large subunits of the cytochrome b6-f complex are cytochrome b6, subunit IV (17 kDa polypeptide, PetD), cytochrome f and the Rieske protein, while the 4 small subunits are PetG, PetL, PetM and PetN. The complex functions as a dimer. It depends on heme b as a cofactor. The cofactor is heme c.

It is found in the cellular thylakoid membrane. Its function is as follows. Component of the cytochrome b6-f complex, which mediates electron transfer between photosystem II (PSII) and photosystem I (PSI), cyclic electron flow around PSI, and state transitions. This chain is Cytochrome b6, found in Trichormus variabilis (strain ATCC 29413 / PCC 7937) (Anabaena variabilis).